The chain runs to 152 residues: Putative pre-16S rRNA nuclease (152 aa).

The protein belongs to the YqgF nuclease family.

The protein resides in the cytoplasm. Its function is as follows. Could be a nuclease involved in processing of the 5'-end of pre-16S rRNA. In Sphingopyxis alaskensis (strain DSM 13593 / LMG 18877 / RB2256) (Sphingomonas alaskensis), this protein is Putative pre-16S rRNA nuclease.